The chain runs to 333 residues: Electron transfer flavoprotein subunit alpha, mitochondrial (333 aa).

The N-terminal 19 residues, 1–19 (MFRAAAPGQLRRAASLLRF), are a transit peptide targeting the mitochondrion. Residues 20-204 (QSTLVIAEHA…GISEWLDQKL (185 aa)) are domain I. Position 59 is an N6-acetyllysine; alternate (K59). N6-succinyllysine; alternate is present on K59. K62 bears the N6-acetyllysine mark. At K69 the chain carries N6-acetyllysine; alternate. K69 carries the N6-succinyllysine; alternate modification. Residue K75 is modified to N6-acetyllysine. An N6-acetyllysine; alternate modification is found at K85. K85 bears the N6-succinyllysine; alternate mark. T93 bears the Phosphothreonine mark. K101 and K139 each carry N6-acetyllysine. S140 carries the post-translational modification Phosphoserine. K158 is subject to N6-acetyllysine; alternate. K158 carries the post-translational modification N6-succinyllysine; alternate. K164 is modified (N6-acetyllysine). N6-succinyllysine is present on K187. Position 203 is an N6-acetyllysine; alternate (K203). K203 bears the N6-succinyllysine; alternate mark. The domain II stretch occupies residues 205–333 (TKSDRPELTG…PEMTEILKKK (129 aa)). K216 carries the N6-succinyllysine modification. Residue R223 participates in FAD binding. K226 and K232 each carry N6-acetyllysine; alternate. K226 and K232 each carry N6-succinyllysine; alternate. Residues S248, 263–266 (VGQT), 281–286 (SGAIQH), and N300 contribute to the FAD site. K301 carries the N6-succinyllysine modification. 318–319 (DL) is a binding site for FAD.

The protein belongs to the ETF alpha-subunit/FixB family. In terms of assembly, heterodimer composed of ETFA and ETFB. Identified in a complex that contains ETFA, ETFB and ETFRF1. Interaction with ETFRF1 promotes dissociation of the bound FAD and loss of electron transfer activity. Interacts with TASOR. It depends on FAD as a cofactor. In terms of tissue distribution, expressed in the spermatogonia, spermatocytes, ovary and granular cells within the cerebellum.

Its subcellular location is the mitochondrion matrix. Functionally, heterodimeric electron transfer flavoprotein that accepts electrons from several mitochondrial dehydrogenases, including acyl-CoA dehydrogenases, glutaryl-CoA and sarcosine dehydrogenase. It transfers the electrons to the main mitochondrial respiratory chain via ETF-ubiquinone oxidoreductase (ETF dehydrogenase). Required for normal mitochondrial fatty acid oxidation and normal amino acid metabolism. This chain is Electron transfer flavoprotein subunit alpha, mitochondrial (Etfa), found in Mus musculus (Mouse).